Consider the following 255-residue polypeptide: Tritrans,polycis-undecaprenyl-diphosphate synthase (geranylgeranyl-diphosphate specific) (255 aa).

Residue aspartate 34 is part of the active site. Aspartate 34 provides a ligand contact to Mg(2+). Residues 35-38 (GNRR), histidine 51, and 79-81 (STE) contribute to the substrate site. The active-site Proton acceptor is asparagine 82. Residues phenylalanine 83, arginine 85, arginine 204, and 210 to 212 (RIS) each bind substrate. Residue glutamate 223 participates in Mg(2+) binding.

This sequence belongs to the UPP synthase family. In terms of assembly, homodimer. The cofactor is Mg(2+).

The enzyme catalyses geranylgeranyl diphosphate + 7 isopentenyl diphosphate = tri-trans,hepta-cis-undecaprenyl diphosphate + 7 diphosphate. Its function is as follows. Catalyzes the sequential condensation of isopentenyl diphosphate (IPP) with geranylgeranyl diphosphate (GGPP) to yield (2Z,6Z,10Z,14Z,18Z,22Z,26Z,30E,34E,38E)-undecaprenyl diphosphate (tritrans,heptacis-UPP). It is probably the precursor of glycosyl carrier lipids. In Picrophilus torridus (strain ATCC 700027 / DSM 9790 / JCM 10055 / NBRC 100828 / KAW 2/3), this protein is Tritrans,polycis-undecaprenyl-diphosphate synthase (geranylgeranyl-diphosphate specific).